A 279-amino-acid chain; its full sequence is Thymidylate synthase (279 aa).

141 to 142 (RR) provides a ligand contact to dUMP. Catalysis depends on Cys161, which acts as the Nucleophile. Residues 181–184 (RSND), Asn192, and 222–224 (HVY) each bind dUMP. A (6R)-5,10-methylene-5,6,7,8-tetrahydrofolate-binding site is contributed by Asp184. Position 278 (Ala278) interacts with (6R)-5,10-methylene-5,6,7,8-tetrahydrofolate.

This sequence belongs to the thymidylate synthase family. Bacterial-type ThyA subfamily. In terms of assembly, homodimer.

It is found in the cytoplasm. The enzyme catalyses dUMP + (6R)-5,10-methylene-5,6,7,8-tetrahydrofolate = 7,8-dihydrofolate + dTMP. It participates in pyrimidine metabolism; dTTP biosynthesis. Its function is as follows. Catalyzes the reductive methylation of 2'-deoxyuridine-5'-monophosphate (dUMP) to 2'-deoxythymidine-5'-monophosphate (dTMP) while utilizing 5,10-methylenetetrahydrofolate (mTHF) as the methyl donor and reductant in the reaction, yielding dihydrofolate (DHF) as a by-product. This enzymatic reaction provides an intracellular de novo source of dTMP, an essential precursor for DNA biosynthesis. The chain is Thymidylate synthase from Bacillus mojavensis.